The following is a 1483-amino-acid chain: MIERGKFRSLTLINWNGFFARTFDLDELVTTLSGGNGAGKSTTMAAFVTALIPDLTLLHFRNTTEAGATSGSRDKGLHGKLKVGVCYSMLDTINSRHQRVVVGVRLQQVAGRDRKVDIKPFAIQGLPMSVQPTQLVTETLNERQARVLPLNELKDKLEAMEGVQFKQFNSITDYHSLMFDLGIIARRLRSASDRSKFYRLIEASLYGGISSAITRSLRDYLLPENSGVRKAFQDMEAALRENRMTLEAIRVTQSDRDLFKHLISEATNYVAADYMRHANERRVHLDKALEFRRELYTSRQQLAAEQYKHVDMARELAEHNGAEGDLEADYQAASDHLNLVQTALRQQEKIERYEADLDELQIRLEEQNEVVAEAIERQEENEARAEAAELEVDELKSQLADYQQALDVQQTRAIQYNQAIAALNRAKELCHLPDLTADSAAEWLETFQAKELEATEKMLSLEQKMSMAQTAHSQFEQAYQLVVAINGPLARNEAWDVARELLREGVEQRHLAEQVQPLRMRLSELEQRLREQQEAERLLADFCKRQGKNFDIDELEALHQELEARIASLSDSVSNAREERMALCQEQEQLQSRIQSLMQRAPVWLAAQNSLNQLSEQCGEEFSSSQDVTEYLQQLLEREREAIVERDEVGARKNAVDEEIERLSQPGGSEDQRLNALAERFGGVLLSEIYDDVSLEDAPYFSALYGPSRHAIVVPDLSQVTEHLEGLTDCPEDLYLIEGDPQSFDDSVFSVDELEKAVVVKIADRQWRYSRFPEVPLFGRAACESRIESLHAEREVLSERFATLSFDVQKTQRLHQAFSRFIGSHLAVAFESDPEPEIRQLNSRRVELERALSNHENDNQQQRIQFEQAKEGVTALNRILPRLNLLADDSLADRVDEIRERLDEAQEAARFVQQFGNQLAKLEPIVSVLQSDPEQFEQLKEDYAYSQQMQRDARQQAFALTEVVQRRAHFSYSDSAEMLSGNSDLNEKLRERLEQAEAERTRAREALRGHAAQLSQYNQVLASLKSSYDTKKELLNDLQRELQDIGVRADSGAEERARIRRDELHAQLSNNRSRRNQLEKALTFCEAEMDNLTRKLRRLERDYFEMREQVVTAKAGWCAVMRMVKDNGVERRLHRRELAYLSADDLRSMSDKALGALRLAVADNEHLRDVLRMSEDPKRPERKIQFFVAVYQHLRERIRQDIIRTDDPVEAIEQMEIELSRLTEELTSREQKLAISSRSVANIIRKTIQREQNRIRILNQGLQNVSFGQVNSVRLNVNVRETHAMLLDVLSEQHEQHQDLFNSNRLTFSEALAKLYQRLNPQIDMGQRTPQTIGEELLDYRNYLEMEVEVNRGSDGWLRAESGALSTGEAIGTGMSILVMVVQSWEDESRRLRGKDISPCRLLFLDEAARLDARSIATLFELCERLQMQLIIAAPENISPEKGTTYKLVRKVFQNTEHVHVVGLRGFAPQLPETLPGSDEAPS.

34–41 (GGNGAGKS) lines the ATP pocket. 7 coiled-coil regions span residues 326 to 418 (LEAD…QYNQ), 444 to 480 (LETFQAKELEATEKMLSLEQKMSMAQTAHSQFEQAYQ), 509 to 601 (RHLA…MQRA), 780 to 804 (RAACESRIESLHAEREVLSERFATL), 837 to 923 (EIRQ…AKLE), 977 to 1115 (EMLS…TAKA), and 1209 to 1265 (VEAI…LQNV). Residues 666–783 (PGGSEDQRLN…EVPLFGRAAC (118 aa)) form a flexible hinge region.

This sequence belongs to the SMC family. MukB subfamily. Homodimerization via its hinge domain. Binds to DNA via its C-terminal region. Interacts, and probably forms a ternary complex, with MukE and MukF via its C-terminal region. The complex formation is stimulated by calcium or magnesium. Interacts with tubulin-related protein FtsZ.

Its subcellular location is the cytoplasm. It localises to the nucleoid. Functionally, plays a central role in chromosome condensation, segregation and cell cycle progression. Functions as a homodimer, which is essential for chromosome partition. Involved in negative DNA supercoiling in vivo, and by this means organize and compact chromosomes. May achieve or facilitate chromosome segregation by condensation DNA from both sides of a centrally located replisome during cell division. This is Chromosome partition protein MukB from Shigella dysenteriae serotype 1 (strain Sd197).